A 113-amino-acid chain; its full sequence is Putative membrane protein insertion efficiency factor (113 aa).

This sequence belongs to the UPF0161 family.

The protein resides in the cell inner membrane. In terms of biological role, could be involved in insertion of integral membrane proteins into the membrane. This is Putative membrane protein insertion efficiency factor from Campylobacter curvus (strain 525.92).